The chain runs to 462 residues: Cysteine--tRNA ligase (462 aa).

Position 24 (C24) interacts with Zn(2+). A 'HIGH' region motif is present at residues 26–36; that stretch reads PTVYDDAHLGH. C199, H224, and E228 together coordinate Zn(2+). The short motif at 256–260 is the 'KMSKS' region element; the sequence is KMSKS. Residue K259 coordinates ATP.

Belongs to the class-I aminoacyl-tRNA synthetase family. In terms of assembly, monomer. The cofactor is Zn(2+).

The protein resides in the cytoplasm. It catalyses the reaction tRNA(Cys) + L-cysteine + ATP = L-cysteinyl-tRNA(Cys) + AMP + diphosphate. The protein is Cysteine--tRNA ligase of Campylobacter jejuni subsp. jejuni serotype O:23/36 (strain 81-176).